The sequence spans 312 residues: Prephenate dehydratase (312 aa).

Positions 3–194 constitute a Prephenate dehydratase domain; it reads GIAYLGPEGT…ARTRFVLVGR (192 aa). The 78-residue stretch at 208–285 folds into the ACT domain; that stretch reads SVVLQLDNVP…ADVRYLGSWP (78 aa). The tract at residues 291–312 is disordered; sequence GAAPPPMDESASWLEGLREGRP.

Homodimer.

The enzyme catalyses prephenate + H(+) = 3-phenylpyruvate + CO2 + H2O. The protein operates within amino-acid biosynthesis; L-phenylalanine biosynthesis; phenylpyruvate from prephenate: step 1/1. The polypeptide is Prephenate dehydratase (pheA) (Mycolicibacterium vanbaalenii (strain DSM 7251 / JCM 13017 / BCRC 16820 / KCTC 9966 / NRRL B-24157 / PYR-1) (Mycobacterium vanbaalenii)).